Consider the following 173-residue polypeptide: 16S rRNA aminocarboxypropyltransferase (173 aa).

4 residues coordinate S-adenosyl-L-methionine: Thr25, Leu72, Leu96, and Ser115.

Belongs to the TDD superfamily. TSR3 family.

It localises to the cytoplasm. The catalysed reaction is an N(1)-methylpseudouridine in rRNA + S-adenosyl-L-methionine = N(1)-methyl-N(3)-[(3S)-3-amino-3-carboxypropyl]pseudouridine in rRNA + S-methyl-5'-thioadenosine + H(+). Its function is as follows. Aminocarboxypropyltransferase that catalyzes the aminocarboxypropyl transfer on pseudouridine corresponding to position 914 in M.jannaschii 16S rRNA. It constitutes the last step in biosynthesis of the hypermodified N1-methyl-N3-(3-amino-3-carboxypropyl) pseudouridine (m1acp3-Psi). This Methanosarcina mazei (strain ATCC BAA-159 / DSM 3647 / Goe1 / Go1 / JCM 11833 / OCM 88) (Methanosarcina frisia) protein is 16S rRNA aminocarboxypropyltransferase.